The sequence spans 164 residues: uncharacterized protein (164 aa).

It is found in the mitochondrion. This is an uncharacterized protein from Arabidopsis thaliana (Mouse-ear cress).